Here is a 110-residue protein sequence, read N- to C-terminus: Glycine cleavage system H-like protein (110 aa).

Residues 10–97 (VEKVGDLYVF…PEENWLFKLD (88 aa)) enclose the Lipoyl-binding domain. At Asp27 the chain carries ADP-ribosyl aspartic acid. The residue at position 56 (Lys56) is an N6-lipoyllysine.

In terms of assembly, lipoylated GcvH-L directly interacts with SAV0325, which reverses the SirTM-mediated mono-ADP-ribosylation of GcvH-L, and with the oxidoreductase SAV0322. Post-translationally, is lipoylated on K-56 by LplA2 (SAV0327) and then mono-ADP-ribosylated, probably on D-27, by SirTM (SAV0326). The mono-ADP-ribosylation state of GcvH-L might regulate the availability of the lipoyl moiety for redox reactions; ADP-ribosylation would inhibit the interaction of the oxidoreductase with GcvH-L when it is not required, thus ADP-ribosylation of GcvH-L might be acting to keep the response 'off' under non-stress conditions.

May act as a carrier protein for the ROS scavenging lipoyl moiety and/or as a substrate for oxidoreductases such as SAV0322 and SAV0323. The protein is Glycine cleavage system H-like protein of Staphylococcus aureus (strain Mu50 / ATCC 700699).